The following is a 385-amino-acid chain: 2-oxoglutarate-dependent dioxygenase AFUA_1G01000 (385 aa).

Residues 203–327 enclose the Fe2OG dioxygenase domain; it reads PSDDFLRLLR…RYSVLVGTRP (125 aa). Positions 230, 232, and 304 each coordinate Fe cation. Arg-318 provides a ligand contact to 2-oxoglutarate.

This sequence belongs to the iron/ascorbate-dependent oxidoreductase family. The cofactor is Fe(2+).

Its function is as follows. 2-oxoglutarate-dependent dioxygenase; part of the gene cluster that mediates the biosynthesis of fumigermin that inhibits germination of spores of the inducing S.rapamycinicus, and thus helps the fungus to defend resources in the shared habitat against a bacterial competitor. The partially reducing polyketide synthase fngA alone is sufficient for the production of fumigermin. FgnA catalyzes the condensation of 3 malonyl-CoA units to an acetyl-CoA starter, and 3 methylations to yield fumigermin. It is remarkable that the five cluster genes including fgnA are conserved in distantly related fungi, supporting the assumption of a fumigermin cluster; it is thus possible that originally all five genes were functional, but that the genes encoding tailoring enzymes became inactive from mutations, similar to the case of the fgnA gene in strains A1163 and Af293. This Aspergillus fumigatus (strain ATCC MYA-4609 / CBS 101355 / FGSC A1100 / Af293) (Neosartorya fumigata) protein is 2-oxoglutarate-dependent dioxygenase AFUA_1G01000.